The chain runs to 409 residues: Tryptophan synthase beta chain (409 aa).

An N6-(pyridoxal phosphate)lysine modification is found at K104.

Belongs to the TrpB family. Tetramer of two alpha and two beta chains. It depends on pyridoxal 5'-phosphate as a cofactor.

It carries out the reaction (1S,2R)-1-C-(indol-3-yl)glycerol 3-phosphate + L-serine = D-glyceraldehyde 3-phosphate + L-tryptophan + H2O. It participates in amino-acid biosynthesis; L-tryptophan biosynthesis; L-tryptophan from chorismate: step 5/5. Its function is as follows. The beta subunit is responsible for the synthesis of L-tryptophan from indole and L-serine. The polypeptide is Tryptophan synthase beta chain (Trichodesmium erythraeum (strain IMS101)).